The chain runs to 1260 residues: Agglutinin-like protein 1 (1260 aa).

Positions 1-17 are cleaved as a signal peptide; the sequence is MLQQFTLLFLYLSIASA. 4 disulfide bridges follow: C73–C150, C96–C112, C205–C298, and C227–C256. 3 ALS repeats span residues 365 to 396, 401 to 432, and 438 to 469; these read TTIT…VDVP, TTVT…VQVP, and VSTT…IREP. N471 carries N-linked (GlcNAc...) asparagine glycosylation. One copy of the ALS 4 repeat lies at 474-505; that stretch reads VTTTEYWSQSFATTTTVTAPPGETDTVIIREP. N-linked (GlcNAc...) asparagine glycosylation is present at N507. An ALS 5 repeat occupies 510-541; it reads VTTTEYWSQSYATTTTVTAPPGGTDTVLIREP. The N-linked (GlcNAc...) asparagine glycan is linked to N543. An ALS 6 repeat occupies 546–577; it reads VTTTEYWSQSYATTTTVTAPPGGTDTVIIREP. An N-linked (GlcNAc...) asparagine glycan is attached at N579. The ALS 7 repeat unit spans residues 582-613; the sequence is VTTTEYWSQSYATTTTITAPPGETDTVIIREP. N-linked (GlcNAc...) asparagine glycosylation occurs at N615. The stretch at 618 to 649 is one ALS 8 repeat; that stretch reads VTTTEYWSQSYATTTTVTAPPGGTDTVLIREP. N651 is a glycosylation site (N-linked (GlcNAc...) asparagine). The ALS 9 repeat unit spans residues 654-685; the sequence is VTTTEYWSQSYATTTTVTAPPGGTDTVLIREP. Residue N687 is glycosylated (N-linked (GlcNAc...) asparagine). An ALS 10 repeat occupies 690–721; sequence VTTTEYWSQSYATTTTVTAPPGGTDTVIIREP. N723 carries an N-linked (GlcNAc...) asparagine glycan. Residues 726–757 form an ALS 11 repeat; that stretch reads VTTTEYWSQSYATTTTVTAPPGGTDTVIIREP. N759 carries N-linked (GlcNAc...) asparagine glycosylation. One copy of the ALS 12 repeat lies at 762-791; that stretch reads VTTTEYWSQSFATTTTVTAPPGGTDTVIIY. N-linked (GlcNAc...) asparagine glycans are attached at residues N820, N886, N918, and N973. Polar residues-rich tracts occupy residues 896-918 and 964-979; these read PTAS…SSDN and KVTF…GTHD. 2 disordered regions span residues 896 to 924 and 954 to 1226; these read PTAS…KSGV and SIPS…SSSP. Residues 980–995 are compositionally biased toward low complexity; the sequence is SQSTSTEIEIVTTSST. Residues 1002 to 1062 show a composition bias toward polar residues; the sequence is VSSNTDLTSE…PTVATSTLAS (61 aa). N-linked (GlcNAc...) asparagine glycans are attached at residues N1045 and N1068. Positions 1073–1090 are enriched in polar residues; it reads HESASTSLKPSMGENSGL. Residues 1091-1110 are compositionally biased toward low complexity; it reads TTSTEIEATTTSPTEAPSPA. Polar residues predominate over residues 1111 to 1154; it reads VSSGTDVTTEPTDTREQPTTLSTTSKTNSESVATTQATNENGGK. 2 stretches are compositionally biased toward low complexity: residues 1155-1176 and 1197-1226; these read SPST…SANS and SHST…SSSP. G1238 is lipidated: GPI-anchor amidated glycine. A propeptide spans 1239-1260 (removed in mature form); sequence SGSIIQHSTWLYGLITLLSLFI.

Belongs to the ALS family. Post-translationally, the GPI-anchor is attached to the protein in the endoplasmic reticulum and serves to target the protein to the cell surface. There, the glucosamine-inositol phospholipid moiety is cleaved off and the GPI-modified mannoprotein is covalently attached via its lipidless GPI glycan remnant to the 1,6-beta-glucan of the outer cell wall layer.

Its subcellular location is the cell membrane. The protein localises to the secreted. The protein resides in the cell wall. In terms of biological role, major cell surface adhesion protein which mediates both yeast-to-host tissue adherence and yeast aggregation. Acts as a downstream effector of the EFG1 regulatory pathway. Required for rapamycin-induced aggregation of C.albicans. Binds glycans and mediates adherence to endothelial and epithelial cells, thereby playing an important role in the pathogenesis of C.albicans infections. This is Agglutinin-like protein 1 (ALS1) from Candida albicans (strain SC5314 / ATCC MYA-2876) (Yeast).